A 108-amino-acid chain; its full sequence is Iron-sulfur cluster assembly protein CyaY (108 aa).

It belongs to the frataxin family.

Involved in iron-sulfur (Fe-S) cluster assembly. May act as a regulator of Fe-S biogenesis. This Burkholderia vietnamiensis (strain G4 / LMG 22486) (Burkholderia cepacia (strain R1808)) protein is Iron-sulfur cluster assembly protein CyaY.